Reading from the N-terminus, the 315-residue chain is tRNA-dihydrouridine(16) synthase (315 aa).

FMN contacts are provided by residues 7–9 and Q68; that span reads PME. The active-site Proton donor is C98. FMN is bound by residues K139, 199-201, and 223-224; these read NGE and GR.

Belongs to the Dus family. DusC subfamily. Requires FMN as cofactor.

It catalyses the reaction 5,6-dihydrouridine(16) in tRNA + NADP(+) = uridine(16) in tRNA + NADPH + H(+). The enzyme catalyses 5,6-dihydrouridine(16) in tRNA + NAD(+) = uridine(16) in tRNA + NADH + H(+). Functionally, catalyzes the synthesis of 5,6-dihydrouridine (D), a modified base found in the D-loop of most tRNAs, via the reduction of the C5-C6 double bond in target uridines. Specifically modifies U16 in tRNAs. The protein is tRNA-dihydrouridine(16) synthase of Aquipseudomonas alcaligenes (Pseudomonas alcaligenes).